Consider the following 281-residue polypeptide: 1-acyl-sn-glycerol-3-phosphate acyltransferase (281 aa).

3 helical membrane passes run 40-60, 71-91, and 110-130; these read IFVCFAIVLITAVAWGLIMVL, LGNLYGHIIGGLVIWLYGIPI, and ASPIDAFFVMWLAPIGTVGVA. The short motif at 109–114 is the HXXXXD motif element; sequence HASPID.

The protein belongs to the 1-acyl-sn-glycerol-3-phosphate acyltransferase family.

It is found in the membrane. It carries out the reaction a 1-acyl-sn-glycero-3-phosphate + an acyl-CoA = a 1,2-diacyl-sn-glycero-3-phosphate + CoA. It functions in the pathway phospholipid metabolism; CDP-diacylglycerol biosynthesis; CDP-diacylglycerol from sn-glycerol 3-phosphate: step 2/3. Its function is as follows. Converts lysophosphatidic acid (LPA) into phosphatidic acid by incorporating acyl moiety at the 2 position. This enzyme uses erucoyl-CoA as an acyl donor. This chain is 1-acyl-sn-glycerol-3-phosphate acyltransferase, found in Limnanthes alba (White meadowfoam).